The sequence spans 674 residues: Sodium/myo-inositol cotransporter 2 (674 aa).

Topologically, residues 1–25 (MESSASSPPLTQSDPLEAFPRRTLE) are extracellular. A helical membrane pass occupies residues 26 to 46 (AGDIAVLVLYFLFVLAVGLWS). Topologically, residues 47-56 (TVKTKRDTVK) are cytoplasmic. Residues 57–77 (GYFLAGGNMLWWPVGASLFAS) traverse the membrane as a helical segment. The Extracellular portion of the chain corresponds to 78 to 102 (NVGSGHFVGLAGSGAAAGLSVTAYE). The helical transmembrane segment at 103–123 (LNGLFFVLMLSWIFLPIYITG) threads the bilayer. Residues 124–140 (QVTTMPEYLRKRFGGNR) lie on the Cytoplasmic side of the membrane. A helical membrane pass occupies residues 141-161 (IPIILAVLYLFIYIFTKISVD). Over 162-180 (MYAGAIFIQQSLHVNLYLA) the chain is Extracellular. Residues 181–201 (IVGLLAVTALYTIAGGLAAVI) traverse the membrane as a helical segment. Residues 202 to 208 (YTDALQT) are Cytoplasmic-facing. The chain crosses the membrane as a helical span at residues 209–229 (LIMLIGALILMGYSFAAVGGL). Residues 230–272 (EGLEEKYFLAMASNRSGNSSCGLPREDAFHIFRDPVTSDLPWP) are Extracellular-facing. A helical transmembrane segment spans residues 273–293 (GILFGMSIPSLWYWCTDQVIV). The Cytoplasmic segment spans residues 294–308 (QRTLAAKNLSHAKGG). The chain crosses the membrane as a helical span at residues 309–329 (SLMAAYLKVLPLFIMVFPGMV). The Extracellular portion of the chain corresponds to 330–374 (SRVLFPDEVACADPEICRKVCSNPAGCSDIAYPKLVLELLPTGLR). The helical transmembrane segment at 375–397 (GLMMAVMVAALTSSLTSIFNSAS) threads the bilayer. The Cytoplasmic segment spans residues 398-418 (TIFTMDLWNHLRPRASEKELM). A helical transmembrane segment spans residues 419 to 439 (IVGRVFVLLLVLVSILWIPVV). Over 440 to 446 (QASQGGQ) the chain is Extracellular. Residues 447 to 467 (LFIYIQSISSYLQPPVAVVFI) form a helical membrane-spanning segment. The Cytoplasmic portion of the chain corresponds to 468 to 479 (MGCFWKRANEKG). Residues 480–500 (AFFGLVLGLLLGLVRLILDFI) traverse the membrane as a helical segment. The Extracellular portion of the chain corresponds to 501–521 (YVQPRCDQLDERPAVVKDVHY). Residues 522–542 (LYFSMILSSVTLITVCAVSWF) form a helical membrane-spanning segment. Residues 543–653 (TEPPSKEMVS…SLEENPLVKT (111 aa)) are Cytoplasmic-facing. Residues 567–589 (EQVPSATPPPLTLSQNGTPEASG) form a disordered region. The segment covering 578-589 (TLSQNGTPEASG) has biased composition (polar residues). A helical transmembrane segment spans residues 654–674 (LLDLNLIICISCAIFLWGYFA).

This sequence belongs to the sodium:solute symporter (SSF) (TC 2.A.21) family.

The protein localises to the membrane. It localises to the apical cell membrane. It catalyses the reaction myo-inositol(out) + 2 Na(+)(out) = myo-inositol(in) + 2 Na(+)(in). The catalysed reaction is 1D-chiro-inositol(out) + 2 Na(+)(out) = 1D-chiro-inositol(in) + 2 Na(+)(in). The enzyme catalyses D-glucose(out) + 2 Na(+)(out) = D-glucose(in) + 2 Na(+)(in). It carries out the reaction D-xylose(out) + 2 Na(+)(out) = D-xylose(in) + 2 Na(+)(in). Its activity is regulated as follows. MI transport activity inhibited by D-chiro-inositol (DCI), phlorizin (Pz) and sodium (Na(+)). Insulin increases D-chiro-inositol uptake. In terms of biological role, involved in the sodium-dependent cotransport of myo-inositol (MI) with a Na(+):MI stoichiometry of 2:1. Exclusively responsible for apical MI transport and absorption in intestine. Can also transport D-chiro-inositol (DCI) but not L-fucose. Exhibits stereospecific cotransport of both D-glucose and D-xylose. May induce apoptosis through the TNF-alpha, PDCD1 pathway. May play a role in the regulation of MI concentration in serum, involving reabsorption in at least the proximal tubule of the kidney. The protein is Sodium/myo-inositol cotransporter 2 of Bos taurus (Bovine).